A 177-amino-acid polypeptide reads, in one-letter code: Large ribosomal subunit protein uL6 (177 aa).

The protein belongs to the universal ribosomal protein uL6 family. In terms of assembly, part of the 50S ribosomal subunit.

Functionally, this protein binds to the 23S rRNA, and is important in its secondary structure. It is located near the subunit interface in the base of the L7/L12 stalk, and near the tRNA binding site of the peptidyltransferase center. The sequence is that of Large ribosomal subunit protein uL6 from Vibrio campbellii (strain ATCC BAA-1116).